Reading from the N-terminus, the 295-residue chain is Light-independent protochlorophyllide reductase iron-sulfur ATP-binding protein (295 aa).

ATP is bound by residues 39–44 (GIGKST) and lysine 68. Serine 43 lines the Mg(2+) pocket. Residues cysteine 124 and cysteine 158 each contribute to the [4Fe-4S] cluster site. An ATP-binding site is contributed by 209 to 210 (NR).

Belongs to the NifH/BchL/ChlL family. As to quaternary structure, homodimer. Protochlorophyllide reductase is composed of three subunits; ChlL, ChlN and ChlB. Requires [4Fe-4S] cluster as cofactor.

It carries out the reaction chlorophyllide a + oxidized 2[4Fe-4S]-[ferredoxin] + 2 ADP + 2 phosphate = protochlorophyllide a + reduced 2[4Fe-4S]-[ferredoxin] + 2 ATP + 2 H2O. It functions in the pathway porphyrin-containing compound metabolism; chlorophyll biosynthesis (light-independent). In terms of biological role, component of the dark-operative protochlorophyllide reductase (DPOR) that uses Mg-ATP and reduced ferredoxin to reduce ring D of protochlorophyllide (Pchlide) to form chlorophyllide a (Chlide). This reaction is light-independent. The L component serves as a unique electron donor to the NB-component of the complex, and binds Mg-ATP. This Prochlorococcus marinus (strain MIT 9515) protein is Light-independent protochlorophyllide reductase iron-sulfur ATP-binding protein.